The chain runs to 366 residues: tRNA/tmRNA (uracil-C(5))-methyltransferase (366 aa).

Residues Gln-190, Tyr-218, Asn-223, Glu-239, and Asp-299 each coordinate S-adenosyl-L-methionine. Cys-324 serves as the catalytic Nucleophile. The Proton acceptor role is filled by Glu-358.

It belongs to the class I-like SAM-binding methyltransferase superfamily. RNA M5U methyltransferase family. TrmA subfamily.

It catalyses the reaction uridine(54) in tRNA + S-adenosyl-L-methionine = 5-methyluridine(54) in tRNA + S-adenosyl-L-homocysteine + H(+). The enzyme catalyses uridine(341) in tmRNA + S-adenosyl-L-methionine = 5-methyluridine(341) in tmRNA + S-adenosyl-L-homocysteine + H(+). Dual-specificity methyltransferase that catalyzes the formation of 5-methyluridine at position 54 (m5U54) in all tRNAs, and that of position 341 (m5U341) in tmRNA (transfer-mRNA). In Escherichia coli (strain ATCC 8739 / DSM 1576 / NBRC 3972 / NCIMB 8545 / WDCM 00012 / Crooks), this protein is tRNA/tmRNA (uracil-C(5))-methyltransferase.